The chain runs to 80 residues: MIIPWQDLDSDTLNNLLEHFVLREGTEYGEHDVSLADKVDEVRQQLKQGLAVIVYSELHESINIVSKATFSSAPVDDIPE.

It belongs to the UPF0270 family.

The chain is UPF0270 protein ASA_3305 from Aeromonas salmonicida (strain A449).